The following is a 236-amino-acid chain: Ubiquinone biosynthesis O-methyltransferase (236 aa).

Residues arginine 39, glycine 59, aspartate 80, and methionine 124 each coordinate S-adenosyl-L-methionine.

It belongs to the methyltransferase superfamily. UbiG/COQ3 family.

The catalysed reaction is a 3-demethylubiquinol + S-adenosyl-L-methionine = a ubiquinol + S-adenosyl-L-homocysteine + H(+). It catalyses the reaction a 3-(all-trans-polyprenyl)benzene-1,2-diol + S-adenosyl-L-methionine = a 2-methoxy-6-(all-trans-polyprenyl)phenol + S-adenosyl-L-homocysteine + H(+). It functions in the pathway cofactor biosynthesis; ubiquinone biosynthesis. In terms of biological role, O-methyltransferase that catalyzes the 2 O-methylation steps in the ubiquinone biosynthetic pathway. This Shewanella putrefaciens (strain CN-32 / ATCC BAA-453) protein is Ubiquinone biosynthesis O-methyltransferase.